A 469-amino-acid polypeptide reads, in one-letter code: Cysteine--tRNA ligase (469 aa).

Cysteine 28 is a binding site for Zn(2+). Residues 30–40 carry the 'HIGH' region motif; that stretch reads PTVYNYIHIGN. Residues cysteine 213, histidine 238, and glutamate 242 each coordinate Zn(2+). The short motif at 270–274 is the 'KMSKS' region element; the sequence is KMSKS. Lysine 273 is an ATP binding site.

The protein belongs to the class-I aminoacyl-tRNA synthetase family. As to quaternary structure, monomer. Zn(2+) is required as a cofactor.

It localises to the cytoplasm. The enzyme catalyses tRNA(Cys) + L-cysteine + ATP = L-cysteinyl-tRNA(Cys) + AMP + diphosphate. The protein is Cysteine--tRNA ligase of Leuconostoc citreum (strain KM20).